We begin with the raw amino-acid sequence, 257 residues long: Isoprenyl transferase (257 aa).

Residue Asp-37 is part of the active site. Asp-37 contacts Mg(2+). Residues Gly-38 to Arg-41, Trp-42, Arg-50, His-54, and Ser-82 to Glu-84 contribute to the substrate site. The Proton acceptor role is filled by Asn-85. Substrate is bound by residues Trp-86, Arg-88, Arg-205, and Arg-211–Ser-213. Glu-224 serves as a coordination point for Mg(2+).

Belongs to the UPP synthase family. Homodimer. It depends on Mg(2+) as a cofactor.

Catalyzes the condensation of isopentenyl diphosphate (IPP) with allylic pyrophosphates generating different type of terpenoids. This chain is Isoprenyl transferase, found in Shouchella clausii (strain KSM-K16) (Alkalihalobacillus clausii).